Consider the following 311-residue polypeptide: Methionyl-tRNA formyltransferase (311 aa).

Residue 110–113 (SLLP) coordinates (6S)-5,6,7,8-tetrahydrofolate.

Belongs to the Fmt family.

It carries out the reaction L-methionyl-tRNA(fMet) + (6R)-10-formyltetrahydrofolate = N-formyl-L-methionyl-tRNA(fMet) + (6S)-5,6,7,8-tetrahydrofolate + H(+). Functionally, attaches a formyl group to the free amino group of methionyl-tRNA(fMet). The formyl group appears to play a dual role in the initiator identity of N-formylmethionyl-tRNA by promoting its recognition by IF2 and preventing the misappropriation of this tRNA by the elongation apparatus. This chain is Methionyl-tRNA formyltransferase, found in Streptococcus pyogenes serotype M2 (strain MGAS10270).